Reading from the N-terminus, the 188-residue chain is Elongation factor P (188 aa).

The protein belongs to the elongation factor P family.

The protein resides in the cytoplasm. It functions in the pathway protein biosynthesis; polypeptide chain elongation. Involved in peptide bond synthesis. Stimulates efficient translation and peptide-bond synthesis on native or reconstituted 70S ribosomes in vitro. Probably functions indirectly by altering the affinity of the ribosome for aminoacyl-tRNA, thus increasing their reactivity as acceptors for peptidyl transferase. In Rickettsia typhi (strain ATCC VR-144 / Wilmington), this protein is Elongation factor P.